The primary structure comprises 571 residues: Urease subunit alpha (571 aa).

The region spanning 133-571 (GGIDTHIHFV…LPLAQRYFLF (439 aa)) is the Urease domain. Ni(2+) is bound by residues His-138, His-140, and Lys-221. Residue Lys-221 is modified to N6-carboxylysine. His-223 serves as a coordination point for substrate. Ni(2+)-binding residues include His-250 and His-276. His-324 (proton donor) is an active-site residue. A Ni(2+)-binding site is contributed by Asp-364.

Belongs to the metallo-dependent hydrolases superfamily. Urease alpha subunit family. As to quaternary structure, heterotrimer of UreA (gamma), UreB (beta) and UreC (alpha) subunits. Three heterotrimers associate to form the active enzyme. The cofactor is Ni cation. Post-translationally, carboxylation allows a single lysine to coordinate two nickel ions.

The protein localises to the cytoplasm. It carries out the reaction urea + 2 H2O + H(+) = hydrogencarbonate + 2 NH4(+). It participates in nitrogen metabolism; urea degradation; CO(2) and NH(3) from urea (urease route): step 1/1. The chain is Urease subunit alpha from Anaeromyxobacter sp. (strain K).